A 598-amino-acid chain; its full sequence is Aspartate--tRNA(Asp/Asn) ligase (598 aa).

Residue E174 coordinates L-aspartate. Residues Q198 to K201 are aspartate. Residue R220 coordinates L-aspartate. Residues R220–E222 and Q229 contribute to the ATP site. H458 is an L-aspartate binding site. E492 is a binding site for ATP. Residue R499 coordinates L-aspartate. G544–R547 contacts ATP.

This sequence belongs to the class-II aminoacyl-tRNA synthetase family. Type 1 subfamily. In terms of assembly, homodimer.

It localises to the cytoplasm. It catalyses the reaction tRNA(Asx) + L-aspartate + ATP = L-aspartyl-tRNA(Asx) + AMP + diphosphate. In terms of biological role, aspartyl-tRNA synthetase with relaxed tRNA specificity since it is able to aspartylate not only its cognate tRNA(Asp) but also tRNA(Asn). Reaction proceeds in two steps: L-aspartate is first activated by ATP to form Asp-AMP and then transferred to the acceptor end of tRNA(Asp/Asn). The sequence is that of Aspartate--tRNA(Asp/Asn) ligase from Dehalococcoides mccartyi (strain ATCC BAA-2266 / KCTC 15142 / 195) (Dehalococcoides ethenogenes (strain 195)).